We begin with the raw amino-acid sequence, 103 residues long: Small ribosomal subunit protein uS10 (103 aa).

It belongs to the universal ribosomal protein uS10 family. Part of the 30S ribosomal subunit.

Involved in the binding of tRNA to the ribosomes. The protein is Small ribosomal subunit protein uS10 of Chlorobium phaeobacteroides (strain DSM 266 / SMG 266 / 2430).